The sequence spans 854 residues: DNA mismatch repair protein MutS (854 aa).

615–622 contributes to the ATP binding site; it reads GPNMGGKS.

It belongs to the DNA mismatch repair MutS family.

Functionally, this protein is involved in the repair of mismatches in DNA. It is possible that it carries out the mismatch recognition step. This protein has a weak ATPase activity. The protein is DNA mismatch repair protein MutS of Aliivibrio fischeri (strain ATCC 700601 / ES114) (Vibrio fischeri).